Here is a 520-residue protein sequence, read N- to C-terminus: 2-isopropylmalate synthase (520 aa).

Residues 5-267 (VIIFDTTLRD…HTNINHQEIY (263 aa)) form the Pyruvate carboxyltransferase domain. Mn(2+)-binding residues include Asp-14, His-202, His-204, and Asn-238. The segment at 392-520 (RLDYFSVQSG…RLQQNNQEMV (129 aa)) is regulatory domain.

The protein belongs to the alpha-IPM synthase/homocitrate synthase family. LeuA type 1 subfamily. Homodimer. It depends on Mn(2+) as a cofactor.

The protein resides in the cytoplasm. The enzyme catalyses 3-methyl-2-oxobutanoate + acetyl-CoA + H2O = (2S)-2-isopropylmalate + CoA + H(+). It participates in amino-acid biosynthesis; L-leucine biosynthesis; L-leucine from 3-methyl-2-oxobutanoate: step 1/4. In terms of biological role, catalyzes the condensation of the acetyl group of acetyl-CoA with 3-methyl-2-oxobutanoate (2-ketoisovalerate) to form 3-carboxy-3-hydroxy-4-methylpentanoate (2-isopropylmalate). The polypeptide is 2-isopropylmalate synthase (Yersinia pseudotuberculosis serotype O:1b (strain IP 31758)).